Here is a 168-residue protein sequence, read N- to C-terminus: Protein C2-DOMAIN ABA-RELATED 3 (168 aa).

Residues 1-106 (MSLMDNLLGI…IEALRMELSG (106 aa)) form the C2 domain. Ca(2+)-binding residues include R24, D25, D30, D76, H77, D78, and D84.

It belongs to the plant CAR protein family. Binds to PYR/PYL/RCAR abscisic acid intracellular receptors in an ABA-independent manner, both at the plasma membrane and in the nucleus. The cofactor is Ca(2+).

It is found in the cell membrane. The protein resides in the nucleus. In terms of biological role, stimulates the GTPase/ATPase activities of Obg-like ATPases. Mediates the transient calcium-dependent interaction of PYR/PYL/RCAR abscisic acid (ABA) receptors with the plasma membrane and thus regulates ABA sensitivity. The protein is Protein C2-DOMAIN ABA-RELATED 3 of Arabidopsis thaliana (Mouse-ear cress).